The primary structure comprises 404 residues: Alanyl-tRNA editing protein AlaX-L (404 aa).

Residues H104, H108, C202, and H206 each coordinate Zn(2+).

The protein belongs to the class-II aminoacyl-tRNA synthetase family. Editing domain AlaX-L subfamily. Zn(2+) is required as a cofactor.

The protein resides in the cytoplasm. Functions in trans to edit the amino acid moiety from mischarged charged tRNA(Ala). The protein is Alanyl-tRNA editing protein AlaX-L (alaXL) of Pyrococcus horikoshii (strain ATCC 700860 / DSM 12428 / JCM 9974 / NBRC 100139 / OT-3).